A 634-amino-acid chain; its full sequence is Ras and EF-hand domain-containing protein homolog (634 aa).

EF-hand domains lie at D5–L33 and L33–H68. The Ca(2+) site is built by D46, D48, S50, K52, and E57. The stretch at L169–E310 forms a coiled coil. Disordered stretches follow at residues E216–E237 and Q308–V328. Residues A449–S454, N552–D555, and A585–L586 each bind GTP. Residues R632–S634 constitute a propeptide, removed in mature form.

The protein belongs to the small GTPase superfamily. Rab family. As to quaternary structure, homodimer.

Its subcellular location is the cytoplasm. The protein localises to the perinuclear region. In terms of biological role, binds GTP and GDP. Plays a role in uterine seam cell development. This chain is Ras and EF-hand domain-containing protein homolog, found in Caenorhabditis briggsae.